The following is a 344-amino-acid chain: Prickle-like protein 4 (344 aa).

The 81-residue stretch at M1–G81 folds into the PET domain. LIM zinc-binding domains follow at residues H82–P147 and R148–D207. Residues G253–C344 form a disordered region. Over residues Q257–N271 the composition is skewed to polar residues. Residues R272–D296 are compositionally biased toward basic and acidic residues. A compositionally biased stretch (polar residues) spans S322–C344.

This sequence belongs to the prickle / espinas / testin family. Expressed in a broad range of normal tissues as well as in hepatocellular carcinoma, breast cancer and prostate cancer tissues.

This chain is Prickle-like protein 4 (PRICKLE4), found in Homo sapiens (Human).